The sequence spans 1012 residues: Structural polyprotein (1012 aa).

Aspartate 30 contributes to the a divalent metal cation binding site. Residues 513-755 (ADKGYEVVAN…AGRQYHLAMA (243 aa)) form the Peptidase S50 domain. Catalysis depends on serine 652, which acts as the Nucleophile. The active site involves lysine 692. The interval 970–1012 (MEMKHRNPRRAPPKPKPKPNAPTQRPPGRLGRWIRTVSDEDLE) is disordered. Basic residues predominate over residues 975–986 (RNPRRAPPKPKP). Residues 1003-1012 (IRTVSDEDLE) form an interaction with VP1 protein region.

Homotrimer. A central divalent metal stabilizes the VP2 trimer. Interacts with host ITGA4/ITGB1. As to quaternary structure, homodimer. Interacts (via C-terminus) with VP1 in the cytoplasm. Interacts with VP2. Post-translationally, specific enzymatic cleavages yield mature proteins. The capsid assembly seems to be regulated by polyprotein processing. The protease VP4 cleaves itself off the polyprotein, thus releasing pre-VP2 and VP3 within the infected cell. During capsid assembly, the C-terminus of pre-VP2 is further processed by VP4, giving rise to VP2, the external capsid protein and three small peptides that all stay closely associated with the capsid.

Its subcellular location is the virion. It is found in the host cytoplasm. Its function is as follows. Capsid protein VP2 self assembles to form an icosahedral capsid with a T=13 symmetry, about 70 nm in diameter, and consisting of 260 VP2 trimers. The capsid encapsulates the genomic dsRNA. VP2 is also involved in attachment and entry into the host cell by interacting with host ITGA4/ITGB1. In terms of biological role, the precursor of VP2 plays an important role in capsid assembly. First, pre-VP2 and VP2 oligomers assemble to form a procapsid. Then, the pre-VP2 intermediates may be processed into VP2 proteins by proteolytic cleavage mediated by VP4 to obtain the mature virion. The final capsid is composed of pentamers and hexamers but VP2 has a natural tendency to assemble into all-pentameric structures. Therefore pre-VP2 may be required to allow formation of the hexameric structures. Functionally, protease VP4 is a serine protease that cleaves the polyprotein into its final products. Pre-VP2 is first partially cleaved, and may be completely processed by VP4 upon capsid maturation. Capsid protein VP3 plays a key role in virion assembly by providing a scaffold for the capsid made of VP2. May self-assemble to form a T=4-like icosahedral inner-capsid composed of at least 180 trimers. Plays a role in genomic RNA packaging by recruiting VP1 into the capsid and interacting with the dsRNA genome segments to form a ribonucleoprotein complex. Additionally, the interaction of the VP3 C-terminal tail with VP1 removes the inherent structural blockade of the polymerase active site. Thus, VP3 can also function as a transcriptional activator. Its function is as follows. Structural peptide 1 is a small peptide derived from pre-VP2 C-terminus. It destabilizes and perforates cell membranes, suggesting a role during entry. In terms of biological role, structural peptide 2 is a small peptide derived from pVP2 C-terminus. It is not essential for the virus viability, but viral growth is affected when missing. Functionally, structural peptide 3 is a small peptide derived from pVP2 C-terminus. It is not essential for the virus viability, but viral growth is affected when missing. Structural peptide 4 is a small peptide derived from pVP2 C-terminus. It is essential for the virus viability. This chain is Structural polyprotein, found in Avian infectious bursal disease virus (strain E) (IBDV).